We begin with the raw amino-acid sequence, 168 residues long: Cell division inhibitor SulA (168 aa).

A ftsZ binding region spans residues 106-112 (ALLTGNY). The segment at 161 to 168 (KIHSSLYH) is lon protease binding.

It belongs to the SulA family. Interacts with FtsZ. In terms of processing, is rapidly cleaved and degraded by the Lon protease once DNA damage is repaired.

In terms of biological role, component of the SOS system and an inhibitor of cell division. Accumulation of SulA causes rapid cessation of cell division and the appearance of long, non-septate filaments. In the presence of GTP, binds a polymerization-competent form of FtsZ in a 1:1 ratio, thus inhibiting FtsZ polymerization and therefore preventing it from participating in the assembly of the Z ring. This mechanism prevents the premature segregation of damaged DNA to daughter cells during cell division. The sequence is that of Cell division inhibitor SulA from Serratia proteamaculans (strain 568).